The following is a 300-amino-acid chain: Small ribosomal subunit biogenesis GTPase RsgA (300 aa).

The CP-type G domain maps to R69–F231. Residues N119–D122 and G172–T180 contribute to the GTP site. 4 residues coordinate Zn(2+): C255, C260, H262, and C268.

Belongs to the TRAFAC class YlqF/YawG GTPase family. RsgA subfamily. As to quaternary structure, monomer. Associates with 30S ribosomal subunit, binds 16S rRNA. The cofactor is Zn(2+).

The protein localises to the cytoplasm. One of several proteins that assist in the late maturation steps of the functional core of the 30S ribosomal subunit. Helps release RbfA from mature subunits. May play a role in the assembly of ribosomal proteins into the subunit. Circularly permuted GTPase that catalyzes slow GTP hydrolysis, GTPase activity is stimulated by the 30S ribosomal subunit. The sequence is that of Small ribosomal subunit biogenesis GTPase RsgA from Bordetella bronchiseptica (strain ATCC BAA-588 / NCTC 13252 / RB50) (Alcaligenes bronchisepticus).